A 125-amino-acid polypeptide reads, in one-letter code: Fluoride-specific ion channel FluC (125 aa).

4 helical membrane-spanning segments follow: residues 9-29, 32-52, 67-87, and 99-119; these read LFCAGGGLTRYYLSGWIYGLL, AFPYGTLVVNIIGAYCIGLIM, IGLTVGFMGGLTTFSTFSYET, and AFTNVLASVAVCLLCTWLGII. Gly-75 and Thr-78 together coordinate Na(+).

The protein belongs to the fluoride channel Fluc/FEX (TC 1.A.43) family.

Its subcellular location is the cell inner membrane. It carries out the reaction fluoride(in) = fluoride(out). With respect to regulation, na(+) is not transported, but it plays an essential structural role and its presence is essential for fluoride channel function. Its function is as follows. Fluoride-specific ion channel. Important for reducing fluoride concentration in the cell, thus reducing its toxicity. This is Fluoride-specific ion channel FluC from Trichlorobacter lovleyi (strain ATCC BAA-1151 / DSM 17278 / SZ) (Geobacter lovleyi).